Consider the following 254-residue polypeptide: Chymotrypsin-like serine proteinase (254 aa).

Residues 1–18 form the signal peptide; sequence MNALLNILLCTLAATALA. A propeptide spans 19 to 23 (activation peptide); that stretch reads EISPN. The 231-residue stretch at 24–254 folds into the Peptidase S1 domain; that stretch reads IVGGSNAAAG…SSFYNWVQTQ (231 aa). An intrachain disulfide couples Cys53 to Cys69. Catalysis depends on charge relay system residues His68 and Asp117. Cystine bridges form between Cys146/Cys218, Cys181/Cys199, and Cys208/Cys233. Ser212 serves as the catalytic Charge relay system.

The protein belongs to the peptidase S1 family. In terms of assembly, monomer. Expressed specifically in the distal quarter of the intestine.

The protein localises to the secreted. It localises to the extracellular space. Activated by an autocatalytic mechanism. In terms of biological role, specificity similar to chymotrypsin. In Haliotis rufescens (California red abalone), this protein is Chymotrypsin-like serine proteinase.